The following is a 215-amino-acid chain: Orotate phosphoribosyltransferase (215 aa).

A 5-phospho-alpha-D-ribose 1-diphosphate-binding site is contributed by K26. 34 to 35 (FF) is an orotate binding site. 5-phospho-alpha-D-ribose 1-diphosphate-binding positions include 72–73 (YK), R99, K100, K103, H105, and 124–132 (DDVITAGTA). T128 and R156 together coordinate orotate.

It belongs to the purine/pyrimidine phosphoribosyltransferase family. PyrE subfamily. As to quaternary structure, homodimer. The cofactor is Mg(2+).

It catalyses the reaction orotidine 5'-phosphate + diphosphate = orotate + 5-phospho-alpha-D-ribose 1-diphosphate. Its pathway is pyrimidine metabolism; UMP biosynthesis via de novo pathway; UMP from orotate: step 1/2. Catalyzes the transfer of a ribosyl phosphate group from 5-phosphoribose 1-diphosphate to orotate, leading to the formation of orotidine monophosphate (OMP). In Shewanella oneidensis (strain ATCC 700550 / JCM 31522 / CIP 106686 / LMG 19005 / NCIMB 14063 / MR-1), this protein is Orotate phosphoribosyltransferase.